A 606-amino-acid chain; its full sequence is Membrane protein insertase YidC (606 aa).

A helical membrane pass occupies residues 8–28 (LILATALSFLVILVWFLLFPP). Low complexity predominate over residues 59–78 (TEAAPGAAPQTAATPTENAP). A disordered region spans residues 59–79 (TEAAPGAAPQTAATPTENAPR). The next 4 membrane-spanning stretches (helical) occupy residues 378-398 (MGVA…PLAW), 448-468 (LPIL…FVTI), 506-526 (SILA…SMWL), and 542-562 (IFAW…SGLI).

This sequence belongs to the OXA1/ALB3/YidC family. Type 1 subfamily. As to quaternary structure, interacts with the Sec translocase complex via SecD. Specifically interacts with transmembrane segments of nascent integral membrane proteins during membrane integration.

It is found in the cell inner membrane. Functionally, required for the insertion and/or proper folding and/or complex formation of integral membrane proteins into the membrane. Involved in integration of membrane proteins that insert both dependently and independently of the Sec translocase complex, as well as at least some lipoproteins. Aids folding of multispanning membrane proteins. This is Membrane protein insertase YidC from Dinoroseobacter shibae (strain DSM 16493 / NCIMB 14021 / DFL 12).